We begin with the raw amino-acid sequence, 246 residues long: MRVGIVGCSGRMGTLLSVLLSSTTRFTLGPGYSRKGAHSLASVIENNDVLVDFSSSSFSEELLSALLSNPKPLIFATTKPIASCSIDEKLERLAVHVPVVVCPNTSLGAYVQKRLAALLARVFDDTYDIRVAEVHHRHKRDPISGTANELVSVLCDAKQKEWNQEYSVGTNCNNVKNIELHASRVGNVSGEHEVAFISDKEQIVLKHTVFSREVFAEGTLRILDWLIDSSPPPGYYGPEVGLKVSV.

7-12 (GCSGRM) lines the NAD(+) pocket. Arg-34 serves as a coordination point for NADP(+). Residues 76 to 78 (ATT) and 102 to 105 (CPNT) contribute to the NAD(+) site. Residue His-135 is the Proton donor/acceptor of the active site. His-136 provides a ligand contact to (S)-2,3,4,5-tetrahydrodipicolinate. Lys-139 (proton donor) is an active-site residue. Residue 145 to 146 (GT) coordinates (S)-2,3,4,5-tetrahydrodipicolinate.

The protein belongs to the DapB family.

The protein localises to the cytoplasm. It catalyses the reaction (S)-2,3,4,5-tetrahydrodipicolinate + NAD(+) + H2O = (2S,4S)-4-hydroxy-2,3,4,5-tetrahydrodipicolinate + NADH + H(+). The catalysed reaction is (S)-2,3,4,5-tetrahydrodipicolinate + NADP(+) + H2O = (2S,4S)-4-hydroxy-2,3,4,5-tetrahydrodipicolinate + NADPH + H(+). It functions in the pathway amino-acid biosynthesis; L-lysine biosynthesis via DAP pathway; (S)-tetrahydrodipicolinate from L-aspartate: step 4/4. Its function is as follows. Catalyzes the conversion of 4-hydroxy-tetrahydrodipicolinate (HTPA) to tetrahydrodipicolinate. The protein is 4-hydroxy-tetrahydrodipicolinate reductase of Chlamydia felis (strain Fe/C-56) (Chlamydophila felis).